The chain runs to 264 residues: MQQYLDLCKHILNNGIKKEDRTGTGTISTFGYQMRFDLQKGFPLLTTKKLHLKSIIHELLWFISGNTNIKYLKDNGVSIWDEWADENGNLGPVYGHQWRSWDTADGRSIDQLKGVIDQIKNNPDSRRLIVSSWNVGEIEKMALPPCHCFYQFYVVNGTLSCMLYQRSADVFIGVPFNIASYALFTMMIAQSCGLRAGEFVHTLGDAHIYLNHVEQVKLQLSRDPRPLPKMNINPDIKDLFQFKYSDFTLTDYDPHPHIKGAVAV.

Arg-21 is a dUMP binding site. Residue His-51 participates in (6R)-5,10-methylene-5,6,7,8-tetrahydrofolate binding. 126-127 lines the dUMP pocket; the sequence is RR. Cys-146 serves as the catalytic Nucleophile. DUMP is bound by residues 166-169, Asn-177, and 207-209; these read RSAD and HIY. Asp-169 is a (6R)-5,10-methylene-5,6,7,8-tetrahydrofolate binding site. Ala-263 contacts (6R)-5,10-methylene-5,6,7,8-tetrahydrofolate.

This sequence belongs to the thymidylate synthase family. Bacterial-type ThyA subfamily. As to quaternary structure, homodimer.

It localises to the cytoplasm. It carries out the reaction dUMP + (6R)-5,10-methylene-5,6,7,8-tetrahydrofolate = 7,8-dihydrofolate + dTMP. It functions in the pathway pyrimidine metabolism; dTTP biosynthesis. In terms of biological role, catalyzes the reductive methylation of 2'-deoxyuridine-5'-monophosphate (dUMP) to 2'-deoxythymidine-5'-monophosphate (dTMP) while utilizing 5,10-methylenetetrahydrofolate (mTHF) as the methyl donor and reductant in the reaction, yielding dihydrofolate (DHF) as a by-product. This enzymatic reaction provides an intracellular de novo source of dTMP, an essential precursor for DNA biosynthesis. The sequence is that of Thymidylate synthase from Ruminiclostridium cellulolyticum (strain ATCC 35319 / DSM 5812 / JCM 6584 / H10) (Clostridium cellulolyticum).